A 190-amino-acid chain; its full sequence is uncharacterized protein (190 aa).

Helical transmembrane passes span 15–35 (LVMS…VLAI), 58–78 (FSSF…GVLI), 94–114 (FFSA…YFAF), and 148–168 (FLFF…SFFV).

It localises to the membrane. This is an uncharacterized protein from Saccharomyces cerevisiae (strain ATCC 204508 / S288c) (Baker's yeast).